We begin with the raw amino-acid sequence, 199 residues long: Outer-membrane lipoprotein LolB (199 aa).

Residues 1-28 form the signal peptide; sequence MSACPAPRSPFRWLHAFTLCLLLAVLAG. A lipid anchor (N-palmitoyl cysteine) is attached at C29. The S-diacylglycerol cysteine moiety is linked to residue C29.

The protein belongs to the LolB family. As to quaternary structure, monomer.

It is found in the cell outer membrane. Plays a critical role in the incorporation of lipoproteins in the outer membrane after they are released by the LolA protein. The polypeptide is Outer-membrane lipoprotein LolB (Bordetella bronchiseptica (strain ATCC BAA-588 / NCTC 13252 / RB50) (Alcaligenes bronchisepticus)).